A 47-amino-acid polypeptide reads, in one-letter code: Defensin-2 (47 aa).

4 disulfide bridges follow: Cys3–Cys47, Cys14–Cys35, Cys20–Cys41, and Cys24–Cys43.

It belongs to the DEFL family. As to expression, epidermis and vascular bundles of pods, stems, roots, leaves and wet or dry seeds.

Its function is as follows. Possesses antifungal activity sensitive to inorganic cations. This Pisum sativum (Garden pea) protein is Defensin-2.